The sequence spans 236 residues: 2,3,4,5-tetrahydropyridine-2,6-dicarboxylate N-acetyltransferase (236 aa).

Belongs to the transferase hexapeptide repeat family. DapH subfamily.

It catalyses the reaction (S)-2,3,4,5-tetrahydrodipicolinate + acetyl-CoA + H2O = L-2-acetamido-6-oxoheptanedioate + CoA. It functions in the pathway amino-acid biosynthesis; L-lysine biosynthesis via DAP pathway; LL-2,6-diaminopimelate from (S)-tetrahydrodipicolinate (acetylase route): step 1/3. Functionally, catalyzes the transfer of an acetyl group from acetyl-CoA to tetrahydrodipicolinate. This Pediococcus pentosaceus (strain ATCC 25745 / CCUG 21536 / LMG 10740 / 183-1w) protein is 2,3,4,5-tetrahydropyridine-2,6-dicarboxylate N-acetyltransferase.